The sequence spans 69 residues: Protein SlyX homolog (69 aa).

This sequence belongs to the SlyX family.

This Pseudomonas aeruginosa (strain LESB58) protein is Protein SlyX homolog.